The following is a 253-amino-acid chain: Major prion protein (253 aa).

The signal sequence occupies residues 1–22; it reads MANLGCWMLVLFVATWSDLGLC. The interval 23 to 230 is interaction with GRB2, ERI3 and SYN1; that stretch reads KKRPKPGGWN…ESQAYYQRGS (208 aa). The tract at residues 26–108 is disordered; sequence PKPGGWNTGG…WHKPSKPKTS (83 aa). 5 repeat units span residues 51 to 59, 60 to 67, 68 to 75, 76 to 83, and 84 to 91. The interval 51–91 is 5 X 8 AA tandem repeats of P-H-G-G-G-W-G-Q; that stretch reads PQGGGGWGQPHGGGWGQPHGGGWGQPHGGGWGQPHGGGWGQ. Gly residues predominate over residues 52 to 95; that stretch reads QGGGGWGQPHGGGWGQPHGGGWGQPHGGGWGQPHGGGWGQGGGT. 12 residues coordinate Cu(2+): H61, G62, G63, H69, G70, G71, H77, G78, G79, H85, G86, and G87. Residues 98-108 show a composition bias toward basic residues; the sequence is QWHKPSKPKTS. Residues C179 and C214 are joined by a disulfide bond. N-linked (GlcNAc...) asparagine glycosylation is found at N181 and N197. S230 carries the GPI-anchor amidated serine lipid modification. The propeptide at 231–253 is removed in mature form; it reads SMVLFSSPPVILLISFLIFLIVG.

The protein belongs to the prion family. Monomer and homodimer. Has a tendency to aggregate into amyloid fibrils containing a cross-beta spine, formed by a steric zipper of superposed beta-strands. Soluble oligomers may represent an intermediate stage on the path to fibril formation. Copper binding may promote oligomerization. Interacts with GRB2, APP, ERI3/PRNPIP and SYN1. Mislocalized cytosolically exposed PrP interacts with MGRN1; this interaction alters MGRN1 subcellular location and causes lysosomal enlargement. Interacts with KIAA1191.

The protein resides in the cell membrane. It is found in the golgi apparatus. Its primary physiological function is unclear. Has cytoprotective activity against internal or environmental stresses. May play a role in neuronal development and synaptic plasticity. May be required for neuronal myelin sheath maintenance. May play a role in iron uptake and iron homeostasis. Soluble oligomers are toxic to cultured neuroblastoma cells and induce apoptosis (in vitro). Association with GPC1 (via its heparan sulfate chains) targets PRNP to lipid rafts. Also provides Cu(2+) or Zn(2+) for the ascorbate-mediated GPC1 deaminase degradation of its heparan sulfate side chains. The chain is Major prion protein (PRNP) from Macaca fascicularis (Crab-eating macaque).